Reading from the N-terminus, the 97-residue chain is Large ribosomal subunit protein bL27 (97 aa).

Positions 14 to 36 are disordered; the sequence is HKKGGGSTSNGRDSQAKRLGAKA.

This sequence belongs to the bacterial ribosomal protein bL27 family.

In Streptococcus sanguinis (strain SK36), this protein is Large ribosomal subunit protein bL27.